The chain runs to 129 residues: Large ribosomal subunit protein bL17 (129 aa).

Belongs to the bacterial ribosomal protein bL17 family. As to quaternary structure, part of the 50S ribosomal subunit. Contacts protein L32.

The protein is Large ribosomal subunit protein bL17 of Polynucleobacter asymbioticus (strain DSM 18221 / CIP 109841 / QLW-P1DMWA-1) (Polynucleobacter necessarius subsp. asymbioticus).